We begin with the raw amino-acid sequence, 214 residues long: UPF0725 protein At1g19565 (214 aa).

Residues 56 to 92 are disordered; sequence EEEYEPSLPSSESPTDSCHADHESPDSPKYQQPAPGE.

It belongs to the UPF0725 (EMB2204) family.

The sequence is that of UPF0725 protein At1g19565 from Arabidopsis thaliana (Mouse-ear cress).